The sequence spans 424 residues: Putative chloroquine resistance transporter (424 aa).

At 1–56 (MTGMKKGKNKKKNVKNDERYKELDSLISNDSEIGNNSRWGGAKRICKLIGNEMRNN) the chain is on the cytoplasmic side. Residues 57–77 (IYVYLLSILYLCVSVMNKVFS) traverse the membrane as a helical segment. The Vacuolar portion of the chain corresponds to 78–88 (KRTLNKIGNYS). An N-linked (GlcNAc...) asparagine glycan is attached at Asn-86. A helical transmembrane segment spans residues 89–109 (FVTSEVHNMICTIVFQLLYFI). The Cytoplasmic portion of the chain corresponds to 110–125 (YRKTSNPASRNESQKN). Residues 126 to 146 (FGWQFFLISLLDASTVIITMI) traverse the membrane as a helical segment. The Vacuolar portion of the chain corresponds to 147 to 156 (GLTRTTGNIQ). The chain crosses the membrane as a helical span at residues 157–177 (SFIMQLIIPVNMYFCFIFLGY). The Cytoplasmic segment spans residues 178-180 (RYH). A helical membrane pass occupies residues 181 to 201 (LFNYLGAFIILITIAAVETVL). Over 202–209 (SYETQSDN) the chain is Vacuolar. A helical membrane pass occupies residues 210–230 (SIIFNLIMIFALIPLSFSNMT). The Cytoplasmic segment spans residues 231–248 (REVVFKKHKINIIRLNAM). The chain crosses the membrane as a helical span at residues 249-269 (VALFQFFTSLLVLPVYNISFL). Topologically, residues 270–317 (KEIYMPFSEMGTNINDGLRCLFYGQSTIVENCGVGMVKMCDQCEGAWK) are vacuolar. 2 cysteine pairs are disulfide-bonded: Cys-289/Cys-312 and Cys-301/Cys-309. The helical transmembrane segment at 318–338 (TFITYSFFNICDNLLVCYIID) threads the bilayer. At 339 to 346 (KFSTMTYT) the chain is on the cytoplasmic side. A helical transmembrane segment spans residues 347–367 (IVSCIQGPAITIAYYFKFLAG). Topologically, residues 368-377 (DVVRQPRLLD) are vacuolar. Residues 378 to 398 (FLTLFGYLLGTIIYRIGNIIL) form a helical membrane-spanning segment. The Cytoplasmic portion of the chain corresponds to 399 to 424 (EKKKMLKALNTDGSEAELTSIETSTA).

The protein belongs to the CRT-like transporter family.

It localises to the vacuole membrane. Nutrient transporter. Involved in maintaining the osmotic homeostasis of the digestive vacuole. This chain is Putative chloroquine resistance transporter, found in Plasmodium chabaudi.